The sequence spans 515 residues: NADH-quinone oxidoreductase subunit N (515 aa).

14 consecutive transmembrane segments (helical) span residues 14 to 34 (ITPI…EAFL), 40 to 60 (WSAQ…ALAL), 80 to 100 (APTL…ILLI), 138 to 158 (TEVF…CAAN), 160 to 180 (LLTM…MCGL), 195 to 215 (YFLL…LLYG), 239 to 259 (LFAG…VGPF), 271 to 291 (PTAV…GGIL), 307 to 327 (GVLY…GLTQ), 333 to 353 (MIAY…IALT), 361 to 381 (MFYL…ISLV), 404 to 424 (VAWV…TSGF), 438 to 458 (GMAP…FFYL), and 485 to 505 (AAIT…SLAL).

This sequence belongs to the complex I subunit 2 family. In terms of assembly, NDH-1 is composed of 14 different subunits. Subunits NuoA, H, J, K, L, M, N constitute the membrane sector of the complex.

It is found in the cell membrane. The catalysed reaction is a quinone + NADH + 5 H(+)(in) = a quinol + NAD(+) + 4 H(+)(out). In terms of biological role, NDH-1 shuttles electrons from NADH, via FMN and iron-sulfur (Fe-S) centers, to quinones in the respiratory chain. The immediate electron acceptor for the enzyme in this species is believed to be a menaquinone. Couples the redox reaction to proton translocation (for every two electrons transferred, four hydrogen ions are translocated across the cytoplasmic membrane), and thus conserves the redox energy in a proton gradient. The sequence is that of NADH-quinone oxidoreductase subunit N from Saccharopolyspora erythraea (strain ATCC 11635 / DSM 40517 / JCM 4748 / NBRC 13426 / NCIMB 8594 / NRRL 2338).